The primary structure comprises 485 residues: Glutamyl-tRNA(Gln) amidotransferase subunit A (485 aa).

Residues K79 and S154 each act as charge relay system in the active site. The active-site Acyl-ester intermediate is the S178.

This sequence belongs to the amidase family. GatA subfamily. As to quaternary structure, heterotrimer of A, B and C subunits.

The enzyme catalyses L-glutamyl-tRNA(Gln) + L-glutamine + ATP + H2O = L-glutaminyl-tRNA(Gln) + L-glutamate + ADP + phosphate + H(+). Its function is as follows. Allows the formation of correctly charged Gln-tRNA(Gln) through the transamidation of misacylated Glu-tRNA(Gln) in organisms which lack glutaminyl-tRNA synthetase. The reaction takes place in the presence of glutamine and ATP through an activated gamma-phospho-Glu-tRNA(Gln). In Staphylococcus aureus (strain MRSA252), this protein is Glutamyl-tRNA(Gln) amidotransferase subunit A.